Reading from the N-terminus, the 453-residue chain is Bifunctional protein GlmU (453 aa).

Residues 1 to 226 form a pyrophosphorylase region; sequence MFAIAILAAG…IDEVSGVNDR (226 aa). UDP-N-acetyl-alpha-D-glucosamine contacts are provided by residues 7–10, lysine 21, glutamine 73, and 78–79; these read LAAG and GT. A Mg(2+)-binding site is contributed by aspartate 103. 4 residues coordinate UDP-N-acetyl-alpha-D-glucosamine: glycine 140, glutamate 155, asparagine 170, and asparagine 224. A Mg(2+)-binding site is contributed by asparagine 224. Residues 227 to 247 form a linker region; that stretch reads AQLANCENLIQQSLRNHWMSK. Residues 248-453 form an N-acetyltransferase region; that stretch reads GVSFIDPESC…NWKTREETNQ (206 aa). Positions 329 and 347 each coordinate UDP-N-acetyl-alpha-D-glucosamine. Histidine 359 (proton acceptor) is an active-site residue. The UDP-N-acetyl-alpha-D-glucosamine site is built by tyrosine 362 and asparagine 373. Acetyl-CoA is bound by residues alanine 376, alanine 419, and arginine 436.

The protein in the N-terminal section; belongs to the N-acetylglucosamine-1-phosphate uridyltransferase family. It in the C-terminal section; belongs to the transferase hexapeptide repeat family. As to quaternary structure, homotrimer. Requires Mg(2+) as cofactor.

It localises to the cytoplasm. It carries out the reaction alpha-D-glucosamine 1-phosphate + acetyl-CoA = N-acetyl-alpha-D-glucosamine 1-phosphate + CoA + H(+). It catalyses the reaction N-acetyl-alpha-D-glucosamine 1-phosphate + UTP + H(+) = UDP-N-acetyl-alpha-D-glucosamine + diphosphate. It participates in nucleotide-sugar biosynthesis; UDP-N-acetyl-alpha-D-glucosamine biosynthesis; N-acetyl-alpha-D-glucosamine 1-phosphate from alpha-D-glucosamine 6-phosphate (route II): step 2/2. Its pathway is nucleotide-sugar biosynthesis; UDP-N-acetyl-alpha-D-glucosamine biosynthesis; UDP-N-acetyl-alpha-D-glucosamine from N-acetyl-alpha-D-glucosamine 1-phosphate: step 1/1. It functions in the pathway bacterial outer membrane biogenesis; LPS lipid A biosynthesis. Catalyzes the last two sequential reactions in the de novo biosynthetic pathway for UDP-N-acetylglucosamine (UDP-GlcNAc). The C-terminal domain catalyzes the transfer of acetyl group from acetyl coenzyme A to glucosamine-1-phosphate (GlcN-1-P) to produce N-acetylglucosamine-1-phosphate (GlcNAc-1-P), which is converted into UDP-GlcNAc by the transfer of uridine 5-monophosphate (from uridine 5-triphosphate), a reaction catalyzed by the N-terminal domain. The chain is Bifunctional protein GlmU from Prochlorococcus marinus (strain MIT 9211).